We begin with the raw amino-acid sequence, 75 residues long: MKKYYVRCKDSKGENASLVIEALSPEHAKEQAYEVYEVGDIYNVSLGEGKSKNCLDRKYSPYIKNDNGKAITIFS.

The chain is SPbeta prophage-derived uncharacterized protein YorX (yorX) from Bacillus subtilis (strain 168).